Consider the following 1025-residue polypeptide: MAADDIVGCYQVDKARRSLTNVESYPKVGEQLHGFTVQEKKHVPELHLTAVRLKHDKTDADYLHVAREDKNNVFGVGFKTNPPDATGVPHILEHTTLCGSEKYPVRDPFFKMLPRSLSNFMNAFTSADHTTYPFATTNQQDFQNLLSVYLDATLHPLLKEEDFRQEGWRLGPEDPRASDALDGKPEDVLFKGVVYNEMKGQISDANYLYYIKYRESIFPALNNSGGDPQYITDLTHKQLVEFSKRNYHPSNAKFLTYGDMPLSTHLKQIGDVLDGFGKGEADTSVKLPIDLSRGPSNVTVPGPIDTFADADKQYKTSTSWYLGDTSEVVETFSAGILSSLLLDGYGSPMYRALIESGLGSSFTPNTGLDTSGRVPVLSVGLTGVSEEDAPKVKEAIQKVYQDSLSAGFSDEKVQGFLHQLELALRHKTANFGIGVMEKTISSWFNGVDPMKELAWNDVINEFKRRYQQGGYLESLMQKYLMNDRCLTFTMVGTPTFHQELDQQEMVRKEKKLSQLVEQHGSMEKAISSLREQELQLLKTQEEAQHADLGCLPSLRVEDISREKERKPVRESKVDDVDVVWREAPTNGLTYFQALNAFEDLPDDLRLLMPLFNDSVMRLGTANKTMEQWEDLIKLKTGGVSSSAFHTSSPTELGKFNEGLQFSGFALDKNIPDMLEILTTLITETDFTSPYAPAMIQELLRLTTNGALDSVAASGHRFALNAAAAGLSRSFWVQEQQSGLAQLQATANLLRDAETSPERLAELIEKLRLIQSFAISKSSSLRVRMVCEPSSAHQNEVVLQKWLAGLPQIRSPTSVDARSMQQVSSKAFYDMPYKVYYSGLAMQTVPFVHKSSAPLSVLSQLLTHNYLHPEIREKGGAYGAAASNGPVKGIFALTSYRDPNPLNTLKVFQNSGIFARDRSWSERELNEAKLGIFQGLDAPVSVDEEGSRYFMSGVTHEMDQRWREQLLDVTARDVNEVAQTFLVDGPRQSVCLLGEKKDWAEDWDVRKLSMNAGEAEAYPEDASTTA.

Zn(2+) is bound at residue H90. Catalysis depends on E93, which acts as the Proton acceptor. H94 serves as a coordination point for Zn(2+). Residue E166 is part of the active site. E197 contributes to the Zn(2+) binding site.

The protein belongs to the peptidase M16 family. PreP subfamily. Monomer and homodimer; homodimerization is induced by binding of the substrate. The cofactor is Zn(2+).

The protein resides in the mitochondrion intermembrane space. It is found in the mitochondrion matrix. Degrades mitochondrial transit peptides after their cleavage in the intermembrane space or in the matrix, and presequence peptides; clearance of these peptides is required to keep the presequence processing machinery running. Preferentially cleaves the N-terminal side of paired basic amino acid residues. Also degrades other unstructured peptides. May function as an ATP-dependent peptidase as opposed to a metalloendopeptidase. The protein is Presequence protease, mitochondrial (cym1) of Aspergillus oryzae (strain ATCC 42149 / RIB 40) (Yellow koji mold).